We begin with the raw amino-acid sequence, 151 residues long: MKIWIDADACPRAVKEILFRASTRLRVPLCLVANRSLAKHAGPLVESVVVADGFDVADDYIAEHAAPTDLVVTADVPLAARIVAKGGVALDPRGELYSEESIGERLAMRDLLSELRDTGMIQGGGPAPFSMSDRNRFASALDSLLHRMLRR.

This sequence belongs to the UPF0178 family.

This Geobacter sulfurreducens (strain ATCC 51573 / DSM 12127 / PCA) protein is UPF0178 protein GSU0171.